The primary structure comprises 78 residues: MSTIEERVKKIVAEQLGVKEEEVTIEKSFVDDLGADSLDTVELVMALEEEFETEIPDEEAEKITTVQAAIDYVKAHQA.

A Carrier domain is found at 2–77 (STIEERVKKI…AAIDYVKAHQ (76 aa)). At serine 37 the chain carries O-(pantetheine 4'-phosphoryl)serine.

It belongs to the acyl carrier protein (ACP) family. Post-translationally, 4'-phosphopantetheine is transferred from CoA to a specific serine of apo-ACP by AcpS. This modification is essential for activity because fatty acids are bound in thioester linkage to the sulfhydryl of the prosthetic group.

The protein resides in the cytoplasm. It functions in the pathway lipid metabolism; fatty acid biosynthesis. In terms of biological role, carrier of the growing fatty acid chain in fatty acid biosynthesis. This Pseudomonas putida (strain ATCC 700007 / DSM 6899 / JCM 31910 / BCRC 17059 / LMG 24140 / F1) protein is Acyl carrier protein.